A 1012-amino-acid chain; its full sequence is Centriole and centriolar satellite protein OFD1 (1012 aa).

In terms of domain architecture, LisH spans 70–102 (LIGASNSLVADHLQRCGYEYSLSVFFPESGLAK). Coiled-coil stretches lie at residues 189–557 (QRIK…ENEV) and 622–662 (DSDL…NSAK). Residues 609 to 665 (TNYPTAWVEGSSPDSDLEFVANTKARVKELQQEAERLEKAFRSYHRRVIKNSAKSPL) form a mediates homooligomerization region. The segment at 615 to 1012 (WVEGSSPDSD…FSHEELDDSW (398 aa)) is mediates the interaction with SDCCAG8. 4 positions are modified to phosphoserine: Ser-663, Ser-669, Ser-686, and Ser-720. Residues 719 to 744 (GSAASRLRGGTSSRRLSSTPLPKAKR) form a disordered region. Positions 720-737 (SAASRLRGGTSSRRLSST) are enriched in low complexity. Position 735 is a phosphoserine; by PKA (Ser-735). 4 positions are modified to phosphoserine: Ser-745, Ser-774, Ser-789, and Ser-811. The segment at 757-794 (RSHIASPSPCPDRMPLPSPTESRHSLSIPPVSSPPEQK) is disordered. Positions 764–774 (SPCPDRMPLPS) are enriched in pro residues. Disordered stretches follow at residues 824–904 (FESS…LQEV) and 963–1012 (KIIQ…DDSW). A coiled-coil region spans residues 867–956 (SVDQKQIEEQ…IKDKSAHSEN (90 aa)). Basic and acidic residues-rich tracts occupy residues 871-904 (KQIE…LQEV) and 973-982 (SADKSSKKMV).

Belongs to the OFD1 family. Homooligomer. Interacts with LCA5. Interacts with RUVBL1; the interaction is direct and may mediate interaction with the NuA4 histone acetyltransferase complex. Interacts with SDCCAG8; the interaction is direct. Interacts with MAP1LC3B. Interacts with C2CD3; OFD1 may act as a negative regulator of C2CD3. Forms a complex with KIAA0753/OFIP and CEP20/FOR20; the interaction with CEP20 is detected only in the presence of KIAA0753. Interacts with PCM1; this interaction may be mediated by KIAA0753/OFIP. Interacts with TBC1D31; regulates OFD1 activity in cilium assembly. Phosphorylated. Phosphorylation at Ser-735, by the cAMP-dependent protein kinase PKA, triggers ubiquitination and proteasomal degradation of OFD1. Also increases its interaction with TBC1D31 and regulates its function in ciliogenesis. In terms of processing, ubiquitinated by PJA2, upon phosphorylation at Ser-735 by PKA, leads to the proteasomal degradation of OFD1. Widely expressed. Expressed in 9 and 14 weeks old embryos in metanephric mesenchyme, oral mucosa, lung, heart, nasal and cranial cartilage, and brain. Expressed in metanephros, brain, tongue, and limb.

The protein localises to the cytoplasm. Its subcellular location is the cytoskeleton. The protein resides in the microtubule organizing center. It is found in the centrosome. It localises to the centriole. The protein localises to the cilium basal body. Its subcellular location is the nucleus. The protein resides in the centriolar satellite. Component of the centrioles controlling mother and daughter centrioles length. Recruits to the centriole IFT88 and centriole distal appendage-specific proteins including CEP164. Involved in the biogenesis of the cilium, a centriole-associated function. The cilium is a cell surface projection found in many vertebrate cells required to transduce signals important for development and tissue homeostasis. Plays an important role in development by regulating Wnt signaling and the specification of the left-right axis. Only OFD1 localized at the centriolar satellites is removed by autophagy, which is an important step in the ciliogenesis regulation. In Homo sapiens (Human), this protein is Centriole and centriolar satellite protein OFD1 (OFD1).